We begin with the raw amino-acid sequence, 64 residues long: Large ribosomal subunit protein uL29 (64 aa).

This sequence belongs to the universal ribosomal protein uL29 family.

This is Large ribosomal subunit protein uL29 from Thiobacillus denitrificans (strain ATCC 25259 / T1).